Here is a 142-residue protein sequence, read N- to C-terminus: uncharacterized protein (142 aa).

Positions 18-137 constitute a Peptidase C39 domain; the sequence is QSSGYSCGPA…KIFTGNVLVV (120 aa).

This is an uncharacterized protein from Methanothermobacter marburgensis (strain ATCC BAA-927 / DSM 2133 / JCM 14651 / NBRC 100331 / OCM 82 / Marburg) (Methanobacterium thermoautotrophicum).